Here is an 80-residue protein sequence, read N- to C-terminus: Small ribosomal subunit protein bS18c (80 aa).

Residues 1–19 (MKKFISRPKRSSRRRKKTP) are compositionally biased toward basic residues. Positions 1–24 (MKKFISRPKRSSRRRKKTPIKPGE) are disordered.

Belongs to the bacterial ribosomal protein bS18 family. In terms of assembly, part of the 30S ribosomal subunit.

It localises to the plastid. It is found in the chloroplast. The polypeptide is Small ribosomal subunit protein bS18c (Staurastrum punctulatum (Green alga)).